Consider the following 918-residue polypeptide: Nitrate reductase [NADH] (918 aa).

The disordered stretch occupies residues 25 to 44 (KNGPNHRADSPVRGCNFPNS). Residue cysteine 195 coordinates Mo-molybdopterin. In terms of domain architecture, Cytochrome b5 heme-binding spans 543 to 618 (SNTYTLSEVK…LEDYRIGELI (76 aa)). Positions 578 and 601 each coordinate heme. The FAD-binding FR-type domain occupies 661–774 (NEKIPCKLIS…KGPLGHIEYT (114 aa)). Residues 714 to 717 (RAYT), 731 to 735 (VVKVY), phenylalanine 736, phenylalanine 743, 748 to 750 (IMS), and threonine 801 each bind FAD.

Belongs to the nitrate reductase family. In terms of assembly, homodimer. FAD is required as a cofactor. The cofactor is heme. Requires Mo-molybdopterin as cofactor.

The enzyme catalyses nitrite + NAD(+) + H2O = nitrate + NADH + H(+). Functionally, nitrate reductase is a key enzyme involved in the first step of nitrate assimilation in plants, fungi and bacteria. This is Nitrate reductase [NADH] from Cucurbita maxima (Pumpkin).